The following is a 260-amino-acid chain: Neuraminyllactose-binding hemagglutinin (260 aa).

A signal peptide spans 1-27 (MKTNGHFKDFAWKKCLLGASVGALLVG). The N-palmitoyl cysteine moiety is linked to residue C28. Residue C28 is the site of S-diacylglycerol cysteine attachment. The interval 134–139 (KRTIQK) is N-acetyl-neuraminyl-alpha(2,3)-lactose binding motif.

The protein localises to the cell outer membrane. In Helicobacter pylori (Campylobacter pylori), this protein is Neuraminyllactose-binding hemagglutinin (hpaA).